The primary structure comprises 187 residues: ATP-dependent protease subunit HslV (187 aa).

Thr7 is an active-site residue. Residues Ala162, Cys165, and Thr168 each coordinate Na(+).

This sequence belongs to the peptidase T1B family. HslV subfamily. As to quaternary structure, a double ring-shaped homohexamer of HslV is capped on each side by a ring-shaped HslU homohexamer. The assembly of the HslU/HslV complex is dependent on binding of ATP.

It localises to the cytoplasm. The catalysed reaction is ATP-dependent cleavage of peptide bonds with broad specificity.. With respect to regulation, allosterically activated by HslU binding. Protease subunit of a proteasome-like degradation complex believed to be a general protein degrading machinery. The polypeptide is ATP-dependent protease subunit HslV (Methylococcus capsulatus (strain ATCC 33009 / NCIMB 11132 / Bath)).